Consider the following 377-residue polypeptide: Guanine nucleotide-binding protein subunit beta-1 (377 aa).

7 WD repeats span residues 63-93 (GHTG…IVWN), 105-135 (LPCA…SIFN), 154-185 (GHKG…VLWD), 202-233 (GHTA…RLWD), 246-276 (GHEG…RLFD), 293-323 (GDIP…YVWD), and 339-369 (SHEG…KIWA).

This sequence belongs to the WD repeat G protein beta family. As to quaternary structure, g proteins are composed of 3 units, alpha, beta and gamma.

In terms of biological role, guanine nucleotide-binding proteins (G proteins) are involved as a modulator or transducer in various transmembrane signaling systems. The beta and gamma chains are required for the GTPase activity, for replacement of GDP by GTP, and for G protein-effector interaction. The sequence is that of Guanine nucleotide-binding protein subunit beta-1 from Nicotiana tabacum (Common tobacco).